The chain runs to 484 residues: Probable glycine dehydrogenase (decarboxylating) subunit 2 (484 aa).

At K270 the chain carries N6-(pyridoxal phosphate)lysine.

This sequence belongs to the GcvP family. C-terminal subunit subfamily. As to quaternary structure, the glycine cleavage system is composed of four proteins: P, T, L and H. In this organism, the P 'protein' is a heterodimer of two subunits. The cofactor is pyridoxal 5'-phosphate.

It catalyses the reaction N(6)-[(R)-lipoyl]-L-lysyl-[glycine-cleavage complex H protein] + glycine + H(+) = N(6)-[(R)-S(8)-aminomethyldihydrolipoyl]-L-lysyl-[glycine-cleavage complex H protein] + CO2. The glycine cleavage system catalyzes the degradation of glycine. The P protein binds the alpha-amino group of glycine through its pyridoxal phosphate cofactor; CO(2) is released and the remaining methylamine moiety is then transferred to the lipoamide cofactor of the H protein. This chain is Probable glycine dehydrogenase (decarboxylating) subunit 2, found in Desulforamulus reducens (strain ATCC BAA-1160 / DSM 100696 / MI-1) (Desulfotomaculum reducens).